The sequence spans 119 residues: MIQKNTLLEVADNSGARAVLCIGLLGGRKSASIGDTVIVSTKSITPRGKVEKGKVYRAVVVRVKSPIRKSDGSVIRFSSNAVVLINDQGEPLGTRVFGPVKKLSSGSFMKIMSLAVEVL.

The protein belongs to the universal ribosomal protein uL14 family. In terms of assembly, part of the 50S ribosomal subunit. Forms a cluster with proteins L3 and L19. In the 70S ribosome, L14 and L19 interact and together make contacts with the 16S rRNA in bridges B5 and B8.

Its function is as follows. Binds to 23S rRNA. Forms part of two intersubunit bridges in the 70S ribosome. This chain is Large ribosomal subunit protein uL14, found in Wolbachia pipientis wMel.